The primary structure comprises 384 residues: tRNA(Met) cytidine acetate ligase (384 aa).

ATP-binding positions include 7–20 (VAEYNPFHSGHEFL), Gly101, Asn153, and Arg178.

This sequence belongs to the TmcAL family.

The protein resides in the cytoplasm. The enzyme catalyses cytidine(34) in elongator tRNA(Met) + acetate + ATP = N(4)-acetylcytidine(34) in elongator tRNA(Met) + AMP + diphosphate. In terms of biological role, catalyzes the formation of N(4)-acetylcytidine (ac(4)C) at the wobble position of elongator tRNA(Met), using acetate and ATP as substrates. First activates an acetate ion to form acetyladenylate (Ac-AMP) and then transfers the acetyl group to tRNA to form ac(4)C34. The sequence is that of tRNA(Met) cytidine acetate ligase from Lactobacillus delbrueckii subsp. bulgaricus (strain ATCC 11842 / DSM 20081 / BCRC 10696 / JCM 1002 / NBRC 13953 / NCIMB 11778 / NCTC 12712 / WDCM 00102 / Lb 14).